A 163-amino-acid chain; its full sequence is D-aminoacyl-tRNA deacylase (163 aa).

The Gly-cisPro motif, important for rejection of L-amino acids signature appears at 141-142 (GP).

It belongs to the DTD family. Homodimer.

The protein resides in the cytoplasm. It catalyses the reaction glycyl-tRNA(Ala) + H2O = tRNA(Ala) + glycine + H(+). It carries out the reaction a D-aminoacyl-tRNA + H2O = a tRNA + a D-alpha-amino acid + H(+). Functionally, an aminoacyl-tRNA editing enzyme that deacylates mischarged D-aminoacyl-tRNAs. Also deacylates mischarged glycyl-tRNA(Ala), protecting cells against glycine mischarging by AlaRS. Acts via tRNA-based rather than protein-based catalysis; rejects L-amino acids rather than detecting D-amino acids in the active site. By recycling D-aminoacyl-tRNA to D-amino acids and free tRNA molecules, this enzyme counteracts the toxicity associated with the formation of D-aminoacyl-tRNA entities in vivo and helps enforce protein L-homochirality. The sequence is that of D-aminoacyl-tRNA deacylase from Neisseria meningitidis serogroup B (strain ATCC BAA-335 / MC58).